Here is a 297-residue protein sequence, read N- to C-terminus: Phosphatidylserine decarboxylase proenzyme (297 aa).

Catalysis depends on charge relay system; for autoendoproteolytic cleavage activity residues aspartate 92, histidine 149, and serine 254. Serine 254 (schiff-base intermediate with substrate; via pyruvic acid; for decarboxylase activity) is an active-site residue. The residue at position 254 (serine 254) is a Pyruvic acid (Ser); by autocatalysis.

The protein belongs to the phosphatidylserine decarboxylase family. PSD-B subfamily. Prokaryotic type I sub-subfamily. Heterodimer of a large membrane-associated beta subunit and a small pyruvoyl-containing alpha subunit. Requires pyruvate as cofactor. Post-translationally, is synthesized initially as an inactive proenzyme. Formation of the active enzyme involves a self-maturation process in which the active site pyruvoyl group is generated from an internal serine residue via an autocatalytic post-translational modification. Two non-identical subunits are generated from the proenzyme in this reaction, and the pyruvate is formed at the N-terminus of the alpha chain, which is derived from the carboxyl end of the proenzyme. The autoendoproteolytic cleavage occurs by a canonical serine protease mechanism, in which the side chain hydroxyl group of the serine supplies its oxygen atom to form the C-terminus of the beta chain, while the remainder of the serine residue undergoes an oxidative deamination to produce ammonia and the pyruvoyl prosthetic group on the alpha chain. During this reaction, the Ser that is part of the protease active site of the proenzyme becomes the pyruvoyl prosthetic group, which constitutes an essential element of the active site of the mature decarboxylase.

It localises to the cell membrane. It catalyses the reaction a 1,2-diacyl-sn-glycero-3-phospho-L-serine + H(+) = a 1,2-diacyl-sn-glycero-3-phosphoethanolamine + CO2. It participates in phospholipid metabolism; phosphatidylethanolamine biosynthesis; phosphatidylethanolamine from CDP-diacylglycerol: step 2/2. In terms of biological role, catalyzes the formation of phosphatidylethanolamine (PtdEtn) from phosphatidylserine (PtdSer). The sequence is that of Phosphatidylserine decarboxylase proenzyme from Bordetella parapertussis (strain 12822 / ATCC BAA-587 / NCTC 13253).